Consider the following 314-residue polypeptide: CBASS oligonucleotide cyclase CdnC (314 aa).

K60 is a binding site for ATP. Mg(2+) is bound by residues D73 and D75. ATP-binding positions include D75, K186, 197–199 (KSF), and N263.

It belongs to the CD-NTase family. C01 subfamily. Forms complexes with Cap7 with 1:1 and 2:2 stoichimetry, and a 1:1:6 CdnC:Cap7:Cap6 complex. The cofactor is Mg(2+).

Its function is as follows. Cyclic nucleotide synthase (second messenger synthase) of a CBASS antivirus system. CBASS (cyclic oligonucleotide-based antiphage signaling system) provides immunity against bacteriophage. The CD-NTase protein synthesizes cyclic nucleotides in response to infection; these serve as specific second messenger signals. The signals activate a diverse range of effectors, leading to bacterial cell death and thus abortive phage infection. A type III CBASS system. Expression of this CBASS system (Cap18-Cap6-Cap7-CdnC-CapW-Cap17) in a susceptible E.coli (strain MG1655) confers resistance to bacteriophage P1. Probable cyclic nucleotide synthase that upon activation catalyzes the synthesis of a cyclic nucleotide. A cyclase activity for this enzyme was not identified in. The chain is CBASS oligonucleotide cyclase CdnC from Escherichia coli (strain KTE188).